A 361-amino-acid chain; its full sequence is NAD-dependent protein deacetylase hst2-1 (361 aa).

The 261-residue stretch at 16–276 folds into the Deacetylase sirtuin-type domain; that stretch reads SVLEARTVEA…RKLARALGWE (261 aa). NAD(+) is bound by residues 43–63 and 126–129; these read GAGI…TGIY and QNID. H146 serves as the catalytic Proton acceptor. The Zn(2+) site is built by C154, C157, C178, and C181. NAD(+) is bound by residues 217-219, 242-244, and C262; these read GTS and NRE. The stretch at 294–328 forms a coiled coil; sequence EEELATPRTREERLENEISRLTAEIDKTLKISDAY. The disordered stretch occupies residues 335-361; sequence RLEGEPLSSPESNGTGLAHVFPHLARR.

It belongs to the sirtuin family. Class I subfamily. Zn(2+) is required as a cofactor.

The protein resides in the cytoplasm. Its subcellular location is the nucleus. The enzyme catalyses N(6)-acetyl-L-lysyl-[protein] + NAD(+) + H2O = 2''-O-acetyl-ADP-D-ribose + nicotinamide + L-lysyl-[protein]. NAD-dependent histone deacetylase, which could function in telomeric silencing, cell cycle progression and chromosome stability. This Emericella nidulans (strain FGSC A4 / ATCC 38163 / CBS 112.46 / NRRL 194 / M139) (Aspergillus nidulans) protein is NAD-dependent protein deacetylase hst2-1.